Here is a 479-residue protein sequence, read N- to C-terminus: RAC-gamma serine/threonine-protein kinase (479 aa).

S2 bears the N-acetylserine mark. Residues 5-107 (TIVKEDWVQK…WTEAIQAVAD (103 aa)) enclose the PH domain. Residues C59 and C76 are joined by a disulfide bond. The region spanning 148 to 405 (FDYLKLLGKG…PKEIMRHSFF (258 aa)) is the Protein kinase domain. ATP is bound by residues 154–162 (LGKGTFGKV) and K177. D271 acts as the Proton acceptor in catalysis. C293 and C307 are oxidised to a cystine. T302 carries O-linked (GlcNAc) threonine glycosylation. Residue T305 is modified to Phosphothreonine; by PDPK1. O-linked (GlcNAc) threonine glycosylation is present at T309. The 74-residue stretch at 406–479 (SGVNWQDVYD…QFSYSASGRE (74 aa)) folds into the AGC-kinase C-terminal domain. A disordered region spans residues 446–479 (ITPPEKDDDDGMDCMDNERRPHFPQFSYSASGRE). Residue T447 is modified to Phosphothreonine. Residues 451 to 460 (KDDDDGMDCM) are compositionally biased toward acidic residues. Position 472 is a phosphoserine; by PKC/PRKCZ (S472). A glycan (O-linked (GlcNAc) serine; alternate) is linked at S472.

It belongs to the protein kinase superfamily. AGC Ser/Thr protein kinase family. RAC subfamily. In terms of assembly, interacts (via PH domain) with TCL1A; this enhances AKT3 phosphorylation and activation. Interacts with TRAF6. Interacts with KCTD20. Interacts with BTBD10. In terms of processing, phosphorylation on Thr-305 and Ser-472 is required for full activity. Phosphorylation of the activation loop at Thr-305 by PDPK1/PDK1 is a prerequisite for full activation. Phosphorylation at Ser-472 by mTORC2 in response to growth factors plays a key role in AKT1 activation by facilitating subsequent phosphorylation of the activation loop by PDPK1/PDK1. Post-translationally, ubiquitinated. When fully phosphorylated and translocated into the nucleus, undergoes 'Lys-48'-polyubiquitination catalyzed by TTC3, leading to its degradation by the proteasome. O-GlcNAcylation at Thr-302 and Thr-309 inhibits activating phosphorylation at Thr-305 via disrupting the interaction between AKT and PDPK1/PDK1.

The protein localises to the nucleus. The protein resides in the cytoplasm. It is found in the membrane. The catalysed reaction is L-seryl-[protein] + ATP = O-phospho-L-seryl-[protein] + ADP + H(+). It catalyses the reaction L-threonyl-[protein] + ATP = O-phospho-L-threonyl-[protein] + ADP + H(+). Its activity is regulated as follows. Two specific sites, one in the kinase domain (Thr-305) and the other in the C-terminal regulatory region (Ser-472), need to be phosphorylated for its full activation. IGF-1 leads to the activation of AKT3, which may play a role in regulating cell survival. AKT3 is one of 3 closely related serine/threonine-protein kinases (AKT1, AKT2 and AKT3) called the AKT kinase, and which regulate many processes including metabolism, proliferation, cell survival, growth and angiogenesis. This is mediated through serine and/or threonine phosphorylation of a range of downstream substrates. Over 100 substrate candidates have been reported so far, but for most of them, no isoform specificity has been reported. AKT3 is the least studied AKT isoform. It plays an important role in brain development and is crucial for the viability of malignant glioma cells. AKT3 isoform may also be the key molecule in up-regulation and down-regulation of MMP13 via IL13. Required for the coordination of mitochondrial biogenesis with growth factor-induced increases in cellular energy demands. Down-regulation by RNA interference reduces the expression of the phosphorylated form of BAD, resulting in the induction of caspase-dependent apoptosis. The sequence is that of RAC-gamma serine/threonine-protein kinase (Akt3) from Rattus norvegicus (Rat).